The following is a 226-amino-acid chain: Deoxyribose-phosphate aldolase (226 aa).

Glu-96 serves as the catalytic Proton donor/acceptor. Lys-157 acts as the Schiff-base intermediate with acetaldehyde in catalysis. Catalysis depends on Lys-185, which acts as the Proton donor/acceptor.

This sequence belongs to the DeoC/FbaB aldolase family. DeoC type 1 subfamily.

The protein localises to the cytoplasm. The catalysed reaction is 2-deoxy-D-ribose 5-phosphate = D-glyceraldehyde 3-phosphate + acetaldehyde. It functions in the pathway carbohydrate degradation; 2-deoxy-D-ribose 1-phosphate degradation; D-glyceraldehyde 3-phosphate and acetaldehyde from 2-deoxy-alpha-D-ribose 1-phosphate: step 2/2. Catalyzes a reversible aldol reaction between acetaldehyde and D-glyceraldehyde 3-phosphate to generate 2-deoxy-D-ribose 5-phosphate. This chain is Deoxyribose-phosphate aldolase, found in Gloeobacter violaceus (strain ATCC 29082 / PCC 7421).